The following is a 1312-amino-acid chain: Beta-N-acetylhexosaminidase (1312 aa).

A signal peptide spans 1 to 33 (MKHEKQQRFSIRKYAVGAASVLIGFAFQAQTVA). A compositionally biased stretch (polar residues) spans 38-59 (TPTTTENQPTIHTVSDSPQSSE). A disordered region spans residues 38–178 (TPTTTENQPT…ATEAGKERAA (141 aa)). Over residues 118 to 177 (AEKETANKKAEEASPKKEEAKEVDSKESNTDKTDKDKPAKKDEAKAEADKPATEAGKERA) the composition is skewed to basic and acidic residues. Catalytic domain stretches follow at residues 176–616 (RAAT…TPEA) and 621–1046 (EAKR…PAVT). 2 G5 domains span residues 1059–1138 (NVET…GAPV) and 1150–1230 (TTEV…GTMV). The disordered stretch occupies residues 1244–1290 (EEKPKLEIPSQPAPSTAPAEESKVLPQDPAPVVTEKKLPETGTHDSA). A compositionally biased stretch (basic and acidic residues) spans 1277–1286 (TEKKLPETGT). The short motif at 1281 to 1285 (LPETG) is the LPXTG sorting signal element. The residue at position 1284 (Thr1284) is a Pentaglycyl murein peptidoglycan amidated threonine. Residues 1285-1312 (GTHDSAGLVVAGLMSTLAAYGLTKRKED) constitute a propeptide, removed by sortase.

This sequence belongs to the glycosyl hydrolase 20 family.

It is found in the secreted. The protein localises to the cell wall. It carries out the reaction Hydrolysis of terminal non-reducing N-acetyl-D-hexosamine residues in N-acetyl-beta-D-hexosaminides.. The sequence is that of Beta-N-acetylhexosaminidase (strH) from Streptococcus pneumoniae serotype 4 (strain ATCC BAA-334 / TIGR4).